A 144-amino-acid polypeptide reads, in one-letter code: D-aminoacyl-tRNA deacylase (144 aa).

Residues 136 to 137 (GP) carry the Gly-cisPro motif, important for rejection of L-amino acids motif.

The protein belongs to the DTD family. As to quaternary structure, homodimer.

It localises to the cytoplasm. It carries out the reaction glycyl-tRNA(Ala) + H2O = tRNA(Ala) + glycine + H(+). The enzyme catalyses a D-aminoacyl-tRNA + H2O = a tRNA + a D-alpha-amino acid + H(+). An aminoacyl-tRNA editing enzyme that deacylates mischarged D-aminoacyl-tRNAs. Also deacylates mischarged glycyl-tRNA(Ala), protecting cells against glycine mischarging by AlaRS. Acts via tRNA-based rather than protein-based catalysis; rejects L-amino acids rather than detecting D-amino acids in the active site. By recycling D-aminoacyl-tRNA to D-amino acids and free tRNA molecules, this enzyme counteracts the toxicity associated with the formation of D-aminoacyl-tRNA entities in vivo and helps enforce protein L-homochirality. This is D-aminoacyl-tRNA deacylase from Aliivibrio fischeri (strain MJ11) (Vibrio fischeri).